An 83-amino-acid chain; its full sequence is Cytochrome c oxidase subunit 7A2, mitochondrial (83 aa).

Residues 1-23 (MLRNLLALRQIAQRTISTTSRRH) constitute a mitochondrion transit peptide. Over 24–48 (FENKVPEKQKLFQEDNGMPVHLKGG) the chain is Mitochondrial matrix. The residue at position 33 (Lys33) is an N6-acetyllysine. The helical transmembrane segment at 49–77 (ASDALLYRATMALTLGGTAYAIYLLAMAA) threads the bilayer. Topologically, residues 78–83 (FPKKQN) are mitochondrial intermembrane.

Belongs to the cytochrome c oxidase VIIa family. Component of the cytochrome c oxidase (complex IV, CIV), a multisubunit enzyme composed of 14 subunits. The complex is composed of a catalytic core of 3 subunits MT-CO1, MT-CO2 and MT-CO3, encoded in the mitochondrial DNA, and 11 supernumerary subunits COX4I, COX5A, COX5B, COX6A, COX6B, COX6C, COX7A, COX7B, COX7C, COX8 and NDUFA4, which are encoded in the nuclear genome. The complex exists as a monomer or a dimer and forms supercomplexes (SCs) in the inner mitochondrial membrane with NADH-ubiquinone oxidoreductase (complex I, CI) and ubiquinol-cytochrome c oxidoreductase (cytochrome b-c1 complex, complex III, CIII), resulting in different assemblies (supercomplex SCI(1)III(2)IV(1) and megacomplex MCI(2)III(2)IV(2)). Interacts with PET100.

The protein localises to the mitochondrion inner membrane. It functions in the pathway energy metabolism; oxidative phosphorylation. Component of the cytochrome c oxidase, the last enzyme in the mitochondrial electron transport chain which drives oxidative phosphorylation. The respiratory chain contains 3 multisubunit complexes succinate dehydrogenase (complex II, CII), ubiquinol-cytochrome c oxidoreductase (cytochrome b-c1 complex, complex III, CIII) and cytochrome c oxidase (complex IV, CIV), that cooperate to transfer electrons derived from NADH and succinate to molecular oxygen, creating an electrochemical gradient over the inner membrane that drives transmembrane transport and the ATP synthase. Cytochrome c oxidase is the component of the respiratory chain that catalyzes the reduction of oxygen to water. Electrons originating from reduced cytochrome c in the intermembrane space (IMS) are transferred via the dinuclear copper A center (CU(A)) of subunit 2 and heme A of subunit 1 to the active site in subunit 1, a binuclear center (BNC) formed by heme A3 and copper B (CU(B)). The BNC reduces molecular oxygen to 2 water molecules using 4 electrons from cytochrome c in the IMS and 4 protons from the mitochondrial matrix. In Mus musculus (Mouse), this protein is Cytochrome c oxidase subunit 7A2, mitochondrial (Cox7a2).